Here is a 396-residue protein sequence, read N- to C-terminus: 1-deoxy-D-xylulose 5-phosphate reductoisomerase (396 aa).

Residues T15, G16, I18, and N127 each coordinate NADPH. K128 contributes to the 1-deoxy-D-xylulose 5-phosphate binding site. E129 lines the NADPH pocket. A Mn(2+)-binding site is contributed by D153. 1-deoxy-D-xylulose 5-phosphate-binding residues include S154, E155, S177, and H200. E155 is a Mn(2+) binding site. G206 contacts NADPH. 1-deoxy-D-xylulose 5-phosphate-binding residues include S213, N218, K219, and E222. Residue E222 participates in Mn(2+) binding.

Belongs to the DXR family. Requires Mg(2+) as cofactor. Mn(2+) serves as cofactor.

The enzyme catalyses 2-C-methyl-D-erythritol 4-phosphate + NADP(+) = 1-deoxy-D-xylulose 5-phosphate + NADPH + H(+). Its pathway is isoprenoid biosynthesis; isopentenyl diphosphate biosynthesis via DXP pathway; isopentenyl diphosphate from 1-deoxy-D-xylulose 5-phosphate: step 1/6. Functionally, catalyzes the NADPH-dependent rearrangement and reduction of 1-deoxy-D-xylulose-5-phosphate (DXP) to 2-C-methyl-D-erythritol 4-phosphate (MEP). The sequence is that of 1-deoxy-D-xylulose 5-phosphate reductoisomerase from Anaplasma marginale (strain Florida).